Consider the following 475-residue polypeptide: Zinc-regulated GTPase metalloprotein activator 1 (475 aa).

50 to 57 lines the GTP pocket; sequence GFLGSGKT. The Zn(2+) site is built by cysteine 116, cysteine 118, and cysteine 119. The CXCC motif signature appears at 116-119; it reads CICC. Residues 119-123 and 229-232 contribute to the GTP site; these read CTMRE and NKCD. A CobW C-terminal domain is found at 302 to 420; it reads IKSFIYKARR…LIESELNNCL (119 aa). The stretch at 440 to 467 forms a coiled coil; it reads IQLDEELEEEELEEEEEEGEYKDEIEMK. A compositionally biased stretch (acidic residues) spans 445–460; the sequence is ELEEEELEEEEEEGEY. The segment at 445–475 is disordered; it reads ELEEEELEEEEEEGEYKDEIEMKVDGSKFKK. Residues 461–475 show a composition bias toward basic and acidic residues; that stretch reads KDEIEMKVDGSKFKK.

This sequence belongs to the SIMIBI class G3E GTPase family. ZNG1 subfamily.

It carries out the reaction GTP + H2O = GDP + phosphate + H(+). Its function is as follows. Zinc chaperone that directly transfers zinc cofactor to target metalloproteins, thereby activating them. Zinc is transferred from the CXCC motif in the GTPase domain to the zinc binding site in target proteins in a process requiring GTP hydrolysis. The chain is Zinc-regulated GTPase metalloprotein activator 1 from Dictyostelium discoideum (Social amoeba).